The chain runs to 476 residues: Bifunctional protein HldE (476 aa).

The ribokinase stretch occupies residues 1–318 (MKVTLPDFRR…ENAIRGRAET (318 aa)). ATP is bound at residue 195 to 198 (NLSE). The active site involves D264. Residues 344 to 476 (MTNGIFDILH…IIQSIKNGRG (133 aa)) form a cytidylyltransferase region.

It in the N-terminal section; belongs to the carbohydrate kinase PfkB family. In the C-terminal section; belongs to the cytidylyltransferase family. As to quaternary structure, homodimer.

It catalyses the reaction D-glycero-beta-D-manno-heptose 7-phosphate + ATP = D-glycero-beta-D-manno-heptose 1,7-bisphosphate + ADP + H(+). The enzyme catalyses D-glycero-beta-D-manno-heptose 1-phosphate + ATP + H(+) = ADP-D-glycero-beta-D-manno-heptose + diphosphate. It functions in the pathway nucleotide-sugar biosynthesis; ADP-L-glycero-beta-D-manno-heptose biosynthesis; ADP-L-glycero-beta-D-manno-heptose from D-glycero-beta-D-manno-heptose 7-phosphate: step 1/4. The protein operates within nucleotide-sugar biosynthesis; ADP-L-glycero-beta-D-manno-heptose biosynthesis; ADP-L-glycero-beta-D-manno-heptose from D-glycero-beta-D-manno-heptose 7-phosphate: step 3/4. Functionally, catalyzes the phosphorylation of D-glycero-D-manno-heptose 7-phosphate at the C-1 position to selectively form D-glycero-beta-D-manno-heptose-1,7-bisphosphate. Its function is as follows. Catalyzes the ADP transfer from ATP to D-glycero-beta-D-manno-heptose 1-phosphate, yielding ADP-D-glycero-beta-D-manno-heptose. In Yersinia pestis bv. Antiqua (strain Antiqua), this protein is Bifunctional protein HldE.